A 201-amino-acid chain; its full sequence is Probable GTP-binding protein EngB (201 aa).

One can recognise an EngB-type G domain in the interval 25–199; it reads HGIEIAFIGY…KSKLNFWYEK (175 aa). GTP contacts are provided by residues 33–40, 60–64, 78–81, 145–148, and 178–180; these read GYSNSGKS, GRTQL, DLPG, TKCD, and FSS. The Mg(2+) site is built by S40 and T62.

Belongs to the TRAFAC class TrmE-Era-EngA-EngB-Septin-like GTPase superfamily. EngB GTPase family. Mg(2+) serves as cofactor.

Functionally, necessary for normal cell division and for the maintenance of normal septation. The sequence is that of Probable GTP-binding protein EngB from Buchnera aphidicola subsp. Schizaphis graminum (strain Sg).